Consider the following 213-residue polypeptide: Adenylate kinase (213 aa).

10-15 (GSGKGS) contacts ATP. Residues 30–60 (STGNLFRAILKEDSELARKIKEINVSGGKLV) are NMP. AMP is bound by residues Thr31, Arg36, 58-60 (KLV), 87-90 (GYPR), and Gln94. Positions 123–160 (GRWMCPKCAGIYNIHFKKPQVDGVCDNDQATLYQRADD) are LID. Arg124 is an ATP binding site. Residues Cys127 and Cys130 each contribute to the Zn(2+) site. ATP is bound at residue 133-134 (IY). Positions 147 and 150 each coordinate Zn(2+). AMP is bound by residues Arg157 and Arg168. Residue Gln196 participates in ATP binding.

It belongs to the adenylate kinase family. As to quaternary structure, monomer.

The protein localises to the cytoplasm. It carries out the reaction AMP + ATP = 2 ADP. Its pathway is purine metabolism; AMP biosynthesis via salvage pathway; AMP from ADP: step 1/1. Catalyzes the reversible transfer of the terminal phosphate group between ATP and AMP. Plays an important role in cellular energy homeostasis and in adenine nucleotide metabolism. The chain is Adenylate kinase from Ureaplasma urealyticum serovar 10 (strain ATCC 33699 / Western).